A 345-amino-acid chain; its full sequence is N-malonyltransferase FDB2 (345 aa).

Residue C110 is the Acyl-thioester intermediate of the active site. The active-site Proton acceptor is the H158. The active site involves D173.

Belongs to the arylamine N-acetyltransferase family.

Its pathway is xenobiotic degradation. N-malonyltransferase; part of the Fusarium detoxification of benzoxazolinone cluster 2 (FDB2) involved in the degradation of benzoxazolinones produced by the host plant. Maize, wheat, and rye produce the 2 benzoxazinone phytoanticipins 2,4-dihy-droxy-7-methoxy-1,4-benzoxazin-3-one (DIMBOA) and 2,4-dihydroxy-1,4-benzoxazin-3-one (DIBOA) that, due to their inherent instability once released, spontaneously degrade to the more stable corresponding benzoxazolinones, 6-methoxy-2-benzoxazolinone (MBOA) and 2-benzoxazolinone (BOA), respectively. The first step in the detoxification of benzoxazolinones involves the hydrolysis of the cyclic ester bond of benzoxazolinones by the FDB1 cluster gamma-lactamase MBL1 to aminophenols. MBL1 is able to convert BOA into 2-aminophenol (2-AP), as well as MBOA into 5-methoxy-2-aminophenol (2-AMP). The FDB2 cluster N-malonyltransferase FDB2/NAT1 then metabolizes aminophenols via N-malonylation to non-toxic malonamic acids. FDB2/NAT1 converts 2-AP into N-(2-hydroxyphenyl) malonamic acid (HPMA) and 2-AMP into N-(2-hydroxy-4-methoxyphenyl) malonamic acid (HMPMA). The duplicated dienlactone hydrolases DLH1 and DLH2 may provide redundant function for hydrolyzing the lactone moiety in the BOA molecule. The roles of the amidases an other enzymes encoded by the 2 FDB clusters have not been identified so far. This Gibberella moniliformis (strain M3125 / FGSC 7600) (Maize ear and stalk rot fungus) protein is N-malonyltransferase FDB2.